A 473-amino-acid chain; its full sequence is Ribulose bisphosphate carboxylase large chain 2 (473 aa).

Substrate contacts are provided by Asn116 and Thr166. Catalysis depends on Lys168, which acts as the Proton acceptor. Lys170 is a binding site for substrate. Residues Lys194, Asp196, and Glu197 each contribute to the Mg(2+) site. Lys194 is subject to N6-carboxylysine. Catalysis depends on His287, which acts as the Proton acceptor. Substrate contacts are provided by Arg288, His320, and Ser372.

This sequence belongs to the RuBisCO large chain family. Type I subfamily. As to quaternary structure, heterohexadecamer of 8 large chains and 8 small chains. It depends on Mg(2+) as a cofactor.

The enzyme catalyses 2 (2R)-3-phosphoglycerate + 2 H(+) = D-ribulose 1,5-bisphosphate + CO2 + H2O. It carries out the reaction D-ribulose 1,5-bisphosphate + O2 = 2-phosphoglycolate + (2R)-3-phosphoglycerate + 2 H(+). Its function is as follows. RuBisCO catalyzes two reactions: the carboxylation of D-ribulose 1,5-bisphosphate, the primary event in carbon dioxide fixation, as well as the oxidative fragmentation of the pentose substrate. Both reactions occur simultaneously and in competition at the same active site. This is Ribulose bisphosphate carboxylase large chain 2 from Acidithiobacillus ferrooxidans (Thiobacillus ferrooxidans).